Consider the following 439-residue polypeptide: MQVIPACNSAAIRSLCPTPESFRNMGWLSVSDAVYSEFIGELATRASNRNYSNEFGLMQPIQEFKAFIESDPVVHQEFIDMFEGIQDSPRNYQELCNMFNDIFRKAPVYGDLGPPVYMIMAKLMNTRAGFSAFTRQRLNLHFKKLFDTWGLFLSSKDSRNVLVADQFDDRHCGWLNERALSAMVKHYNGRAFDEVFLCDKNAPYYGFNSYDDFFNRRFRNRDIDRPVVGGVNNTTLISAACESLSYNVSYDVQSLDTLVFKGETYSLKHLLNNDPFTPQFEHGSILQGFLNVTAYHRWHAPVNGTIVKIINVPGTYFAQAPSTIGDPIPDNDYDPPPYLKSLVYFSNIAARQIMFIEADNKEIGLIFLVFIGMTEISTCEATVSEGQHVNRGDDLGMFHFGGSSFALGLRKDCRAEIVEKFTEPGTVIRINEVVAALKA.

The protein belongs to the phosphatidylserine decarboxylase family.

It catalyses the reaction L-tryptophan + H(+) = tryptamine + CO2. It functions in the pathway secondary metabolite biosynthesis. L-tryptophan decarboxylase; part of the gene cluster that mediates the biosynthesis of psilocybin, a psychotropic tryptamine-derived natural product. The first step in the pathway is the decarboxylation of L-tryptophan to tryptamine by the decarboxylase psiD. 4-hydroxy-L-tryptophan is accepted as substrate by psiD as well. The cytochrome P450 monooxygenase psiH then converts tryptamine to 4-hydroxytryptamine. The kinase psiK catalyzes the 4-O-phosphorylation step by converting 4-hydroxytryptamine into norbaeocystin. The methyltransferase psiM then catalyzes iterative methyl transfer to the amino group of norbaeocystin to yield psilocybin via a monomethylated intermediate, baeocystin. 4-hydroxy-6-methyl-l-tryptophancan also be converted the decarboxylase PsiD, kinase PsiK, and methyltransferase PsiM into respectively 6-methyl-norbaeocystin, 6-methylbaeocystin, and 6-methylpsilocybin. The protein is L-tryptophan decarboxylase of Psilocybe cubensis (Psychedelic mushroom).